A 328-amino-acid chain; its full sequence is Trans-O-hydroxybenzylidenepyruvate hydratase-aldolase (328 aa).

It belongs to the DapA family. In terms of assembly, homotrimer.

It carries out the reaction (3E)-4-(2-hydroxyphenyl)-2-oxobut-3-enoate + H2O = salicylaldehyde + pyruvate. It functions in the pathway aromatic compound metabolism; naphthalene degradation. With respect to regulation, inhibited bye p-chloromercuribenzoate and salicylaldehyde. Activated by salicylate. In terms of biological role, involved in the naphthalene and naphthalenesulfonate catabolic pathway. Catalyzes the transformation of trans-O-hydroxybenzylidenepyruvate (THBPA) to salicylaldehyde and pyruvate. The reaction is reversible. Can also use 2,4-dihydroxybenzalpyruvate (2,4-DHBP) and 2,6-dihydroxybenzalpyruvate (2,6-DHBP). The polypeptide is Trans-O-hydroxybenzylidenepyruvate hydratase-aldolase (nsaE) (Sphingobium xenophagum).